A 226-amino-acid chain; its full sequence is tRNA (guanine-N(1)-)-methyltransferase (226 aa).

S-adenosyl-L-methionine is bound by residues G110 and 129 to 134 (IGDYIL).

The protein belongs to the RNA methyltransferase TrmD family. Homodimer.

It is found in the cytoplasm. It catalyses the reaction guanosine(37) in tRNA + S-adenosyl-L-methionine = N(1)-methylguanosine(37) in tRNA + S-adenosyl-L-homocysteine + H(+). In terms of biological role, specifically methylates guanosine-37 in various tRNAs. The polypeptide is tRNA (guanine-N(1)-)-methyltransferase (Malacoplasma penetrans (strain HF-2) (Mycoplasma penetrans)).